The primary structure comprises 492 residues: Auxin transporter-like protein 1 (492 aa).

Topologically, residues M1–Q67 are cytoplasmic. A helical membrane pass occupies residues V68 to L85. Residues S86–G87 are Extracellular-facing. A helical membrane pass occupies residues V88–L108. Residues Y109–K143 are Cytoplasmic-facing. Residues A144–A164 form a helical membrane-spanning segment. Topologically, residues C165–T180 are extracellular. The chain crosses the membrane as a helical span at residues W181–Y201. Position 202 (R202) is a topological domain, cytoplasmic. Residues I203–A223 traverse the membrane as a helical segment. At L224–L240 the chain is on the extracellular side. Residues V241–V261 form a helical membrane-spanning segment. The Cytoplasmic segment spans residues E262 to K274. Residues Y275–M295 form a helical membrane-spanning segment. Topologically, residues Y296 to A322 are extracellular. Residues V323 to F343 form a helical membrane-spanning segment. Topologically, residues V344–R364 are cytoplasmic. The helical transmembrane segment at L365 to N385 threads the bilayer. A topological domain (extracellular) is located at residue S386. A helical transmembrane segment spans residues A387–L407. Over T408–M432 the chain is Cytoplasmic. The helical transmembrane segment at F433 to W453 threads the bilayer. The Extracellular segment spans residues A454–H492.

Belongs to the amino acid/polyamine transporter 2 family. Amino acid/auxin permease (AAAP) (TC 2.A.18.1) subfamily.

It localises to the cell membrane. In terms of biological role, carrier protein involved in proton-driven auxin influx. May mediate the formation of auxin gradient from developing leaves (site of auxin biosynthesis) to tips. This is Auxin transporter-like protein 1 from Oryza sativa subsp. japonica (Rice).